Reading from the N-terminus, the 377-residue chain is Bradyzoite pseudokinase 1 (377 aa).

The N-terminal stretch at 1 to 26 (MANTSVRRRQLLSSVLLLQWLTTVLG) is a signal peptide. The interval 39–58 (HGQFPSLRRTEGVSQSGSGH) is disordered. The 307-residue stretch at 48-354 (TEGVSQSGSG…IEEIMKDPLF (307 aa)) folds into the Protein kinase domain.

Belongs to the protein kinase superfamily. STE Ser/Thr protein kinase family. WNG subfamily. In terms of assembly, forms a complex composed of BPK1, MCP4, MAG1, GRA8 and GRA9. Interacts with MCP4. Interacts with MAG1. Interacts with GRA8. Interacts with GRA9.

It is found in the secreted. Required for the growth, maintenance, and/or stability, and thus infectivity, of bradyzoite cysts. The polypeptide is Bradyzoite pseudokinase 1 (Toxoplasma gondii).